The chain runs to 288 residues: Programmed cell death protein 1 (288 aa).

A signal peptide spans 1 to 24 (MQIPQAPWPVVWAVLQLGWRPGWF). The segment at 25-34 (LDSPDRPWNP) is nivolumab binding. Residues 25–170 (LDSPDRPWNP…RPAGQFQTLV (146 aa)) lie on the Extracellular side of the membrane. The Ig-like V-type domain occupies 35 to 145 (PTFSPALLVV…ESLRAELRVT (111 aa)). N49, N58, N74, and N116 each carry an N-linked (GlcNAc...) asparagine glycan. Residues C54 and C123 are joined by a disulfide bond. An interaction with CD274/PDCD1L1 region spans residues 70–77 (MSPSNQTD). The interval 74–99 (NQTDKLAAFPEDRSQPGQDCRFRVTQ) is pembrolizumab binding. Residues 171–191 (VGVVGGLLGSLVLLVWVLAVI) traverse the membrane as a helical segment. Over 192–288 (CSRAARGTIG…PEDGHCSWPL (97 aa)) the chain is Cytoplasmic. The short motif at 221–226 (VDYGEL) is the ITIM motif element. Y223 carries the phosphotyrosine modification. K233 is covalently cross-linked (Glycyl lysine isopeptide (Lys-Gly) (interchain with G-Cter in ubiquitin)). Position 234 is a phosphothreonine; by MAPK3 (T234). Positions 247 to 251 (EYATI) match the ITSM motif motif. The residue at position 248 (Y248) is a Phosphotyrosine. The disordered stretch occupies residues 254–288 (PSGMGTSSPARRGSADGPRSAQPLRPEDGHCSWPL). The segment covering 278–288 (RPEDGHCSWPL) has biased composition (basic and acidic residues).

Monomer. Interacts with CD274/PDCD1L1. Interacts with CD273/PDCD1LG2. Interacts with FBXO38; leading to ubiquitination and degradation of PDCD1 by the proteasome. Ubiquitinated at Lys-233 by the SCF(FBXO38) complex, leading to its proteasomal degradation. Ubiquitinated via 'Lys-48'-linked polyubiquitin chains. Deubiquitinated and thus stabilized by USP5. Post-translationally, tyrosine phosphorylated at Tyr-223 (within ITIM motif) and Tyr-248 (ITSM motif) upon ligand binding. Phosphorylation at Tyr-248 promotes the recruitment of the protein tyrosine phosphatase PTPN11/SHP-2 that mediates dephosphorylation of key TCR proximal signaling molecules, such as ZAP70, PRKCQ/PKCtheta and CD247/CD3zeta. Phosphorylation at Thr-234 promotes the recruitment of the deubiquitinase USP5. In terms of processing, N-glycosylation at Asn-58 contains at least two N-acetylglucosamine units and one fucose. N-glycosylation does not affect binding to nivolumab drug.

The protein resides in the cell membrane. With respect to regulation, inhibited by pembrolizumab (also named MK-3475 or lambrolizumab), a monoclonal antibody that prevents the interaction with CD274/PDCD1L1. Inhibited by nivolumab (also named ONO-4538, BMS-936558 or Opdivo), a monoclonal antibody that prevents the interaction with CD274/PDCD1L1. The interaction with nivolumab is not dependent on glycosylation and depends on a loop at the N-terminus (N-terminal loop, corresponding to residues 25-34). Targeting the interaction between PDCD1 and CD274/PDCD1L1 with pembrolizumab and nivolumab antibodies has demonstrated great promise as a strategy for controlling and eradicating cancer. Pembrolizumab and nivolumab are used for treatment of patients with advanced melanoma. These antibodies are also effective against other cancers, such as non-small cell lung cancer, renal cell carcinoma, bladder cancer and Hodgkin's lymphoma. Its function is as follows. Inhibitory receptor on antigen activated T-cells that plays a critical role in induction and maintenance of immune tolerance to self. Delivers inhibitory signals upon binding to ligands CD274/PDCD1L1 and CD273/PDCD1LG2. Following T-cell receptor (TCR) engagement, PDCD1 associates with CD3-TCR in the immunological synapse and directly inhibits T-cell activation. Suppresses T-cell activation through the recruitment of PTPN11/SHP-2: following ligand-binding, PDCD1 is phosphorylated within the ITSM motif, leading to the recruitment of the protein tyrosine phosphatase PTPN11/SHP-2 that mediates dephosphorylation of key TCR proximal signaling molecules, such as ZAP70, PRKCQ/PKCtheta and CD247/CD3zeta. Functionally, the PDCD1-mediated inhibitory pathway is exploited by tumors to attenuate anti-tumor immunity and escape destruction by the immune system, thereby facilitating tumor survival. The interaction with CD274/PDCD1L1 inhibits cytotoxic T lymphocytes (CTLs) effector function. The blockage of the PDCD1-mediated pathway results in the reversal of the exhausted T-cell phenotype and the normalization of the anti-tumor response, providing a rationale for cancer immunotherapy. This chain is Programmed cell death protein 1, found in Homo sapiens (Human).